The sequence spans 174 residues: NADH-ubiquinone oxidoreductase chain 6 (174 aa).

Helical transmembrane passes span 24–44, 53–73, 82–102, and 143–163; these read LALG…TGLM, ILFL…TSLA, MKLT…SFIM, and FITI…VKIT.

This sequence belongs to the complex I subunit 6 family.

It is found in the mitochondrion membrane. It catalyses the reaction a ubiquinone + NADH + 5 H(+)(in) = a ubiquinol + NAD(+) + 4 H(+)(out). Core subunit of the mitochondrial membrane respiratory chain NADH dehydrogenase (Complex I) that is believed to belong to the minimal assembly required for catalysis. Complex I functions in the transfer of electrons from NADH to the respiratory chain. The immediate electron acceptor for the enzyme is believed to be ubiquinone. This Drosophila melanogaster (Fruit fly) protein is NADH-ubiquinone oxidoreductase chain 6 (mt:ND6).